A 394-amino-acid polypeptide reads, in one-letter code: Elongation factor Tu (394 aa).

A tr-type G domain is found at 10 to 204 (KPHVNVGTIG…HLDTYIPEPE (195 aa)). The tract at residues 19–26 (GHVDHGKT) is G1. 19–26 (GHVDHGKT) serves as a coordination point for GTP. Thr-26 lines the Mg(2+) pocket. The tract at residues 60 to 64 (GITIN) is G2. The tract at residues 81-84 (DCPG) is G3. GTP-binding positions include 81–85 (DCPGH) and 136–139 (NKCD). The segment at 136 to 139 (NKCD) is G4. The interval 174-176 (SAL) is G5.

Belongs to the TRAFAC class translation factor GTPase superfamily. Classic translation factor GTPase family. EF-Tu/EF-1A subfamily. In terms of assembly, monomer.

It localises to the cytoplasm. It catalyses the reaction GTP + H2O = GDP + phosphate + H(+). Its function is as follows. GTP hydrolase that promotes the GTP-dependent binding of aminoacyl-tRNA to the A-site of ribosomes during protein biosynthesis. In Klebsiella pneumoniae subsp. pneumoniae (strain ATCC 700721 / MGH 78578), this protein is Elongation factor Tu.